Reading from the N-terminus, the 491-residue chain is Probable cytosol aminopeptidase (491 aa).

Lys-264 and Asp-269 together coordinate Mn(2+). Lys-276 is a catalytic residue. Residues Asp-287, Asp-346, and Glu-348 each coordinate Mn(2+). The active site involves Arg-350.

This sequence belongs to the peptidase M17 family. It depends on Mn(2+) as a cofactor.

It is found in the cytoplasm. The enzyme catalyses Release of an N-terminal amino acid, Xaa-|-Yaa-, in which Xaa is preferably Leu, but may be other amino acids including Pro although not Arg or Lys, and Yaa may be Pro. Amino acid amides and methyl esters are also readily hydrolyzed, but rates on arylamides are exceedingly low.. The catalysed reaction is Release of an N-terminal amino acid, preferentially leucine, but not glutamic or aspartic acids.. Functionally, presumably involved in the processing and regular turnover of intracellular proteins. Catalyzes the removal of unsubstituted N-terminal amino acids from various peptides. The chain is Probable cytosol aminopeptidase from Xylella fastidiosa (strain 9a5c).